We begin with the raw amino-acid sequence, 588 residues long: Disabled homolog 1 (588 aa).

Residues 1–26 are disordered; it reads MSTETELQVAVKTSAKKDSRKKGQDR. Basic and acidic residues predominate over residues 15–26; sequence AKKDSRKKGQDR. A PID domain is found at 36 to 189; the sequence is KGEGVRYKAK…CEQAVYQTIL (154 aa). Y198, Y220, and Y232 each carry phosphotyrosine. Disordered stretches follow at residues 417–443, 451–470, and 502–588; these read LTPL…RQKM, FQMA…PSLT, and LTPV…QAGS. Residues 424-436 show a composition bias toward polar residues; sequence PGTSDSTRSSPQT. Composition is skewed to low complexity over residues 503 to 512 and 520 to 534; these read TPVTSTTPST and PRQS…SHAS. Position 524 is a phosphoserine; by CDK5 (S524). Residues 537-546 show a composition bias toward acidic residues; the sequence is TTDDIFEEGF.

In terms of assembly, associates with the SH2 domains of SRC, FYN and ABL. Interacts (phosphorylated on tyrosine residues) with CRK and CRKL (via respective SH2 domain). Interacts with SIAH1, LRP8 and VLDLR. Interacts with LRP1. Interacts with APLP1 (via NPXY motif). Interacts with DAB2IP. Interacts with ZSWIM8. In terms of processing, phosphorylated by FYN on Tyr-198 and Tyr-220 upon reelin induction in embryonic neurons. Also phosphorylated on Ser-524 independently of reelin signaling. Ubiquitinated by various cullin-5-RING E3 ubiquitin-protein ligase complexes (ECS complexes) following ligand-binding and phosphorylation, leading to its degradation. Ubiquitinated by the ECS(SOCS7) complex in the cortical plate of the developing cerebral cortex following ligand-binding and phosphorylation by FYN, leading to its degradation by the proteasome. Recognized by ZSWIM8 through a disorder targets misorder mechanism that eliminates misfolded DAB1 via ubiquitination and proteasomal degradation. In terms of tissue distribution, mainly expressed in brain.

Its subcellular location is the cytoplasm. Functionally, signaling adapter of the reelin-mediated signaling pathway, which regulates the migration and differentiation of postmitotic neurons during brain development. Mediates intracellular transduction of Reelin signaling following reelin (RELN)-binding to its receptor: acts by docking proteins through its phosphotyrosine residues and PID domain. The sequence is that of Disabled homolog 1 (DAB1) from Homo sapiens (Human).